A 517-amino-acid polypeptide reads, in one-letter code: Phospholipase C C (517 aa).

A signal peptide (tat-type signal) is located at residues 1-39; that stretch reads MVSQGAFAGMSRRAFLAKAAGAGAAAVLTDWAAPVIEKA.

It belongs to the bacterial phospholipase C family. In terms of processing, predicted to be exported by the Tat system. The position of the signal peptide cleavage has not been experimentally proven.

The protein resides in the secreted. It is found in the cell wall. The catalysed reaction is a 1,2-diacyl-sn-glycero-3-phosphocholine + H2O = phosphocholine + a 1,2-diacyl-sn-glycerol + H(+). The enzyme catalyses 1,2-dihexadecanoyl-sn-glycero-3-phosphocholine + H2O = 1,2-dihexadecanoyl-sn-glycerol + phosphocholine + H(+). Its function is as follows. Involved in virulence. Induces cytotoxic effects on mouse macrophage cell lines, via direct or indirect enzymatic hydrolysis of cell membrane phospholipids. Hydrolyzes phosphatidylcholine. Does not have hemolytic activity. This chain is Phospholipase C C, found in Mycobacterium tuberculosis (strain ATCC 25618 / H37Rv).